The following is a 154-amino-acid chain: Myoglobin (154 aa).

The region spanning 2–148 is the Globin domain; it reads GLSDGEWQLV…FRNDMATKYK (147 aa). The residue at position 4 (Ser4) is a Phosphoserine. His65 contacts nitrite. Position 65 (His65) interacts with O2. Position 94 (His94) interacts with heme b.

It belongs to the globin family. As to quaternary structure, monomeric.

Its subcellular location is the cytoplasm. The protein resides in the sarcoplasm. It carries out the reaction Fe(III)-heme b-[protein] + nitric oxide + H2O = Fe(II)-heme b-[protein] + nitrite + 2 H(+). The enzyme catalyses H2O2 + AH2 = A + 2 H2O. In terms of biological role, monomeric heme protein which primary function is to store oxygen and facilitate its diffusion within muscle tissues. Reversibly binds oxygen through a pentacoordinated heme iron and enables its timely and efficient release as needed during periods of heightened demand. Depending on the oxidative conditions of tissues and cells, and in addition to its ability to bind oxygen, it also has a nitrite reductase activity whereby it regulates the production of bioactive nitric oxide. Under stress conditions, like hypoxia and anoxia, it also protects cells against reactive oxygen species thanks to its pseudoperoxidase activity. The sequence is that of Myoglobin (MB) from Tachyglossus aculeatus aculeatus (Southeast Australian short-beaked echidna).